Consider the following 239-residue polypeptide: mRNA turnover protein 4 homolog (239 aa).

The tract at residues 216 to 239 (QQMGDDLPESAPESEGESEEEDDS) is disordered. Residues 221-239 (DLPESAPESEGESEEEDDS) are compositionally biased toward acidic residues. A phosphoserine mark is found at Ser225, Ser229, and Ser233.

Belongs to the universal ribosomal protein uL10 family. Associates with the pre-60S ribosomal particle. Interacts with MINAS-60 (product of an alternative open reading frame of RBM10).

Its subcellular location is the nucleus. It localises to the nucleolus. The protein localises to the cytoplasm. Functionally, component of the ribosome assembly machinery. Nuclear paralog of the ribosomal protein P0, it binds pre-60S subunits at an early stage of assembly in the nucleolus, and is replaced by P0 in cytoplasmic pre-60S subunits and mature 80S ribosomes. In Bos taurus (Bovine), this protein is mRNA turnover protein 4 homolog (MRTO4).